Here is a 175-residue protein sequence, read N- to C-terminus: 6,7-dimethyl-8-ribityllumazine synthase (175 aa).

5-amino-6-(D-ribitylamino)uracil is bound by residues Phe24, 58-60 (ALE), and 82-84 (AVI). 87–88 (ET) is a binding site for (2S)-2-hydroxy-3-oxobutyl phosphate. His90 serves as the catalytic Proton donor. Asn115 contacts 5-amino-6-(D-ribitylamino)uracil. Arg129 contacts (2S)-2-hydroxy-3-oxobutyl phosphate. The tract at residues 151-175 (LEPEEDDEDEDEEDEDFDDEETDRR) is disordered. Acidic residues predominate over residues 152–175 (EPEEDDEDEDEEDEDFDDEETDRR).

The protein belongs to the DMRL synthase family.

It catalyses the reaction (2S)-2-hydroxy-3-oxobutyl phosphate + 5-amino-6-(D-ribitylamino)uracil = 6,7-dimethyl-8-(1-D-ribityl)lumazine + phosphate + 2 H2O + H(+). Its pathway is cofactor biosynthesis; riboflavin biosynthesis; riboflavin from 2-hydroxy-3-oxobutyl phosphate and 5-amino-6-(D-ribitylamino)uracil: step 1/2. In terms of biological role, catalyzes the formation of 6,7-dimethyl-8-ribityllumazine by condensation of 5-amino-6-(D-ribitylamino)uracil with 3,4-dihydroxy-2-butanone 4-phosphate. This is the penultimate step in the biosynthesis of riboflavin. This Bordetella petrii (strain ATCC BAA-461 / DSM 12804 / CCUG 43448) protein is 6,7-dimethyl-8-ribityllumazine synthase.